The chain runs to 234 residues: Ubiquinone biosynthesis O-methyltransferase (234 aa).

S-adenosyl-L-methionine contacts are provided by Arg36, Gly56, Asp77, and Met125.

Belongs to the methyltransferase superfamily. UbiG/COQ3 family.

It carries out the reaction a 3-demethylubiquinol + S-adenosyl-L-methionine = a ubiquinol + S-adenosyl-L-homocysteine + H(+). The enzyme catalyses a 3-(all-trans-polyprenyl)benzene-1,2-diol + S-adenosyl-L-methionine = a 2-methoxy-6-(all-trans-polyprenyl)phenol + S-adenosyl-L-homocysteine + H(+). It participates in cofactor biosynthesis; ubiquinone biosynthesis. In terms of biological role, O-methyltransferase that catalyzes the 2 O-methylation steps in the ubiquinone biosynthetic pathway. In Actinobacillus pleuropneumoniae serotype 7 (strain AP76), this protein is Ubiquinone biosynthesis O-methyltransferase.